A 103-amino-acid chain; its full sequence is UPF0134 protein MPN_484 (103 aa).

Belongs to the UPF0134 family.

This chain is UPF0134 protein MPN_484, found in Mycoplasma pneumoniae (strain ATCC 29342 / M129 / Subtype 1) (Mycoplasmoides pneumoniae).